The chain runs to 458 residues: Exodeoxyribonuclease 7 large subunit (458 aa).

This sequence belongs to the XseA family. Heterooligomer composed of large and small subunits.

It localises to the cytoplasm. It carries out the reaction Exonucleolytic cleavage in either 5'- to 3'- or 3'- to 5'-direction to yield nucleoside 5'-phosphates.. Bidirectionally degrades single-stranded DNA into large acid-insoluble oligonucleotides, which are then degraded further into small acid-soluble oligonucleotides. The chain is Exodeoxyribonuclease 7 large subunit from Yersinia enterocolitica serotype O:8 / biotype 1B (strain NCTC 13174 / 8081).